The primary structure comprises 701 residues: Polyribonucleotide nucleotidyltransferase (701 aa).

Mg(2+) contacts are provided by Asp490 and Asp496. Positions 557–616 (PKVVTMSINPDKIRDVIGPGGKKINEIIDETGVKLDIEQDGTIFIGAVDQAMINRAKEII) constitute a KH domain. An S1 motif domain is found at 626-694 (GQVYHAKVKR…KQGRVNASHK (69 aa)).

It belongs to the polyribonucleotide nucleotidyltransferase family. Mg(2+) serves as cofactor.

The protein resides in the cytoplasm. It catalyses the reaction RNA(n+1) + phosphate = RNA(n) + a ribonucleoside 5'-diphosphate. Functionally, involved in mRNA degradation. Catalyzes the phosphorolysis of single-stranded polyribonucleotides processively in the 3'- to 5'-direction. This is Polyribonucleotide nucleotidyltransferase from Staphylococcus epidermidis (strain ATCC 12228 / FDA PCI 1200).